A 107-amino-acid chain; its full sequence is Cytochrome c2 (107 aa).

Positions 14, 17, 18, and 80 each coordinate heme c.

The protein belongs to the cytochrome c family. In terms of processing, binds 1 heme c group covalently per subunit.

In terms of biological role, cytochrome c2 is found mainly in purple, non-sulfur, photosynthetic bacteria where it functions as the electron donor to the oxidized bacteriochlorophyll in the photophosphorylation pathway. However, it may also have a role in the respiratory chain and is found in some non-photosynthetic bacteria. The polypeptide is Cytochrome c2 (Rhodoblastus acidophilus (Rhodopseudomonas acidophila)).